A 321-amino-acid polypeptide reads, in one-letter code: Lipoyl synthase (321 aa).

Positions 68, 73, 79, 94, 98, 101, and 308 each coordinate [4Fe-4S] cluster. The 218-residue stretch at 80–297 (FNHGTATFMI…KAAAMDMGFT (218 aa)) folds into the Radical SAM core domain.

Belongs to the radical SAM superfamily. Lipoyl synthase family. [4Fe-4S] cluster is required as a cofactor.

Its subcellular location is the cytoplasm. The enzyme catalyses [[Fe-S] cluster scaffold protein carrying a second [4Fe-4S](2+) cluster] + N(6)-octanoyl-L-lysyl-[protein] + 2 oxidized [2Fe-2S]-[ferredoxin] + 2 S-adenosyl-L-methionine + 4 H(+) = [[Fe-S] cluster scaffold protein] + N(6)-[(R)-dihydrolipoyl]-L-lysyl-[protein] + 4 Fe(3+) + 2 hydrogen sulfide + 2 5'-deoxyadenosine + 2 L-methionine + 2 reduced [2Fe-2S]-[ferredoxin]. It functions in the pathway protein modification; protein lipoylation via endogenous pathway; protein N(6)-(lipoyl)lysine from octanoyl-[acyl-carrier-protein]: step 2/2. In terms of biological role, catalyzes the radical-mediated insertion of two sulfur atoms into the C-6 and C-8 positions of the octanoyl moiety bound to the lipoyl domains of lipoate-dependent enzymes, thereby converting the octanoylated domains into lipoylated derivatives. The protein is Lipoyl synthase of Erwinia tasmaniensis (strain DSM 17950 / CFBP 7177 / CIP 109463 / NCPPB 4357 / Et1/99).